Consider the following 574-residue polypeptide: 2-succinyl-5-enolpyruvyl-6-hydroxy-3-cyclohexene-1-carboxylate synthase (574 aa).

This sequence belongs to the TPP enzyme family. MenD subfamily. In terms of assembly, homodimer. Mg(2+) is required as a cofactor. Requires Mn(2+) as cofactor. Thiamine diphosphate serves as cofactor.

The enzyme catalyses isochorismate + 2-oxoglutarate + H(+) = 5-enolpyruvoyl-6-hydroxy-2-succinyl-cyclohex-3-ene-1-carboxylate + CO2. The protein operates within quinol/quinone metabolism; 1,4-dihydroxy-2-naphthoate biosynthesis; 1,4-dihydroxy-2-naphthoate from chorismate: step 2/7. It functions in the pathway quinol/quinone metabolism; menaquinone biosynthesis. In terms of biological role, catalyzes the thiamine diphosphate-dependent decarboxylation of 2-oxoglutarate and the subsequent addition of the resulting succinic semialdehyde-thiamine pyrophosphate anion to isochorismate to yield 2-succinyl-5-enolpyruvyl-6-hydroxy-3-cyclohexene-1-carboxylate (SEPHCHC). The sequence is that of 2-succinyl-5-enolpyruvyl-6-hydroxy-3-cyclohexene-1-carboxylate synthase from Rubrobacter xylanophilus (strain DSM 9941 / JCM 11954 / NBRC 16129 / PRD-1).